Consider the following 290-residue polypeptide: Cilia- and flagella-associated protein 298 (290 aa).

This sequence belongs to the CFAP298 family. As to quaternary structure, interacts with ZMYND10.

It is found in the cytoplasm. The protein resides in the cytoskeleton. Its subcellular location is the cilium basal body. Functionally, plays a role in motile cilium function, possibly by acting on outer dynein arm assembly. Seems to be important for initiation rather than maintenance of cilium motility. Required for correct positioning of cilia at the apical cell surface, suggesting an additional role in the planar cell polarity (PCP) pathway. May suppress canonical Wnt signaling activity. In Mus musculus (Mouse), this protein is Cilia- and flagella-associated protein 298.